The primary structure comprises 488 residues: UDP-N-acetylmuramoyl-L-alanyl-D-glutamate--2,6-diaminopimelate ligase (488 aa).

Residues Leu-24, Ser-26, and 41–43 (HQV) each bind UDP-N-acetyl-alpha-D-muramoyl-L-alanyl-D-glutamate. Residue 113–119 (GTNGKTT) participates in ATP binding. UDP-N-acetyl-alpha-D-muramoyl-L-alanyl-D-glutamate is bound by residues Asn-154, 155–156 (TT), Ser-182, Gln-188, and Arg-190. Lys-222 is modified (N6-carboxylysine). Meso-2,6-diaminopimelate contacts are provided by residues Arg-386, 410 to 413 (DNPR), Gly-461, and Glu-465. Positions 410 to 413 (DNPR) match the Meso-diaminopimelate recognition motif motif.

Belongs to the MurCDEF family. MurE subfamily. The cofactor is Mg(2+). Post-translationally, carboxylation is probably crucial for Mg(2+) binding and, consequently, for the gamma-phosphate positioning of ATP.

The protein localises to the cytoplasm. It catalyses the reaction UDP-N-acetyl-alpha-D-muramoyl-L-alanyl-D-glutamate + meso-2,6-diaminopimelate + ATP = UDP-N-acetyl-alpha-D-muramoyl-L-alanyl-gamma-D-glutamyl-meso-2,6-diaminopimelate + ADP + phosphate + H(+). It functions in the pathway cell wall biogenesis; peptidoglycan biosynthesis. In terms of biological role, catalyzes the addition of meso-diaminopimelic acid to the nucleotide precursor UDP-N-acetylmuramoyl-L-alanyl-D-glutamate (UMAG) in the biosynthesis of bacterial cell-wall peptidoglycan. The chain is UDP-N-acetylmuramoyl-L-alanyl-D-glutamate--2,6-diaminopimelate ligase from Haemophilus influenzae (strain 86-028NP).